The primary structure comprises 191 residues: UPF0398 protein LCABL_17010 (191 aa).

Belongs to the UPF0398 family.

This Lacticaseibacillus casei (strain BL23) (Lactobacillus casei) protein is UPF0398 protein LCABL_17010.